The chain runs to 651 residues: Acetyl-coenzyme A synthetase (651 aa).

CoA-binding positions include 191-194 (RGGK), Thr311, and Asn335. ATP contacts are provided by residues 387–389 (GEP), 411–416 (DTWWQT), Asp500, and Arg515. Residue Ser523 coordinates CoA. An ATP-binding site is contributed by Arg526. Mg(2+) is bound by residues Val537, His539, and Val542. Residue Arg584 participates in CoA binding. Lys609 carries the N6-acetyllysine modification.

The protein belongs to the ATP-dependent AMP-binding enzyme family. Mg(2+) is required as a cofactor. Post-translationally, acetylated. Deacetylation by the SIR2-homolog deacetylase activates the enzyme.

It carries out the reaction acetate + ATP + CoA = acetyl-CoA + AMP + diphosphate. In terms of biological role, catalyzes the conversion of acetate into acetyl-CoA (AcCoA), an essential intermediate at the junction of anabolic and catabolic pathways. AcsA undergoes a two-step reaction. In the first half reaction, AcsA combines acetate with ATP to form acetyl-adenylate (AcAMP) intermediate. In the second half reaction, it can then transfer the acetyl group from AcAMP to the sulfhydryl group of CoA, forming the product AcCoA. The protein is Acetyl-coenzyme A synthetase of Pseudomonas syringae pv. tomato (strain ATCC BAA-871 / DC3000).